Consider the following 155-residue polypeptide: Microsomal glutathione S-transferase 1 (155 aa).

Topologically, residues 3–9 (DLTQVMD) are lumenal. Residues 10–33 (DEVFMAFASYATIILSKMMLMSTA) traverse the membrane as a helical segment. Residues 34-62 (TAFYRLTRKVFANPEDCVAFGKGENAKKY) are Cytoplasmic-facing. A glutathione-binding site is contributed by arginine 38. An N6-acetyllysine mark is found at lysine 42, lysine 55, and lysine 60. Residues 63–96 (LRTDDRVERVRRAHLNDLENIIPFLGIGLLYSLS) form a helical membrane-spanning segment. Residues arginine 73, arginine 74, histidine 76, and glutamate 81 each contribute to the glutathione site. Over 97–99 (GPD) the chain is Lumenal. The chain crosses the membrane as a helical span at residues 100-123 (PSTAILHFRLFVGARIYHTIAYLT). Tyrosine 121 serves as a coordination point for glutathione. Over 124 to 128 (PLPQP) the chain is Cytoplasmic. Residues 129–148 (NRALSFFVGYGVTLSMAYRL) traverse the membrane as a helical segment. Residues 149–155 (LKSKLYL) are Lumenal-facing.

This sequence belongs to the MAPEG family. As to quaternary structure, homotrimer; The trimer binds only one molecule of glutathione. Highly expressed in liver.

Its subcellular location is the endoplasmic reticulum membrane. It is found in the mitochondrion outer membrane. The enzyme catalyses RX + glutathione = an S-substituted glutathione + a halide anion + H(+). Conjugation of reduced glutathione to a wide number of exogenous and endogenous hydrophobic electrophiles. The protein is Microsomal glutathione S-transferase 1 (MGST1) of Homo sapiens (Human).